The sequence spans 1781 residues: Atrochrysone carboxylic acid synthase (1781 aa).

Residues 15–253 form an N-terminal acylcarrier protein transacylase domain (SAT) region; sequence TRDLFRRLHV…KHVALPVYAG (239 aa). Residues 390-823 form the Ketosynthase family 3 (KS3) domain; the sequence is QSKIAIVGMA…GGNTSVVVEE (434 aa). Residues C563, H698, and H741 each act as for beta-ketoacyl synthase activity in the active site. The segment at 925–1244 is malonyl-CoA:ACP transacylase (MAT) domain; sequence FAFTGQGASH…SLGLLHCAGL (320 aa). Residues 1312 to 1631 are product template (PT) domain; that stretch reads TSTVQQIIEE…RVLLNRFFSA (320 aa). The tract at residues 1316–1451 is N-terminal hotdog fold; that stretch reads QQIIEETFSD…ADIVYGLPTD (136 aa). The region spanning 1316-1626 is the PKS/mFAS DH domain; it reads QQIIEETFSD…FRRYPRVLLN (311 aa). The active-site Proton acceptor; for dehydratase activity is H1348. A C-terminal hotdog fold region spans residues 1478 to 1626; it reads IANRLSHNMA…FRRYPRVLLN (149 aa). Catalysis depends on D1537, which acts as the Proton donor; for dehydratase activity. A disordered region spans residues 1633 to 1653; it reads DSDTSKHTSATDVSPPKKVVQ. The region spanning 1703–1780 is the Carrier domain; that stretch reads VDSDSTASKA…DLKAWLMEYY (78 aa). An O-(pantetheine 4'-phosphoryl)serine modification is found at S1740.

The enzyme catalyses holo-[ACP] + 8 malonyl-CoA + 8 H(+) = atrochrysone carboxyl-[ACP] + 8 CO2 + 8 CoA + 2 H2O. It participates in secondary metabolite biosynthesis. Its function is as follows. Atrochrysone carboxylic acid synthase; part of the gene cluster that mediates the biosynthesis of the dimeric xanthones cryptosporioptides. The pathway begins with the synthesis of atrochrysone thioester by the polyketide synthase dmx-nrPKS. The atrochrysone carboxyl ACP thioesterase dmxR1 then breaks the thioester bond and releases the atrochrysone carboxylic acid from dmx-nrPKS. Atrochrysone carboxylic acid is decarboxylated by the decarboxylase dmxR15, and oxidized by the anthrone oxygenase dmxR16 to yield emodin. Emodin is then reduced to emodin hydroquinone by the oxidoreductase dmxR7. A-ring reduction by the short chain dehydrogenase dmxR18, dehydration by the scytalone dehydratase-like protein dmxR17 and probable spontaneous re-oxidation, results in overall deoxygenation to chrysophanol. Baeyer-Villiger oxidation by the Baeyer-Villiger monooxygenase (BVMO) dmxR6 then yields monodictylactone in equilibrium with monodictyphenone. In the case of the cryptosporioptides biosynthesis, monodictylactone is reduced at C-12 to an alcohol (by the short chain dehydrogenases dmxR12 or dmxR8) and hydroxylated at C-5 by dmxR9, yielding the electron-rich aromatic which could eliminate H(2)O to form the ortho-quinonemethide, followed by tautomerisation to paraquinone and complete the formal reduction to produce the 10-methylgroup. Conjugate addition of C-4a-OH to the resulting paraquinone by the monooxygenase dmxR10 then gives cyclohexadienone, which is then reduced at C-5 by the short chain dehydrogenase dmxR3 to give the dihydroxanthone. The 6,7-epoxide in the cryptosporioptides could be introduced by the cytochrome P450 monooxygenase dmxL3. The highly reducing PKS dmxL2 manufactures butyrate, which is further carboxylated by dmxL1 to form ethylmalonate. It is not yet clear whether the carboxylation occurs while the butyrate is attached to the ACP of dmxL2, but this unusual fungal metabolite could then be esterified to O-5 by the O-acetyltransferase dmxR13. Finally, dimerization performed by dmxR5 gives the observed dimers cryptosporioptides A, B and C as the final products of the pathway. This chain is Atrochrysone carboxylic acid synthase, found in Cryptosporiopsis sp. (strain 8999).